A 457-amino-acid chain; its full sequence is Phosphoglucosamine mutase (457 aa).

The active-site Phosphoserine intermediate is S103. Mg(2+)-binding residues include S103, D244, D246, and D248. The residue at position 103 (S103) is a Phosphoserine.

Belongs to the phosphohexose mutase family. It depends on Mg(2+) as a cofactor. Activated by phosphorylation.

The enzyme catalyses alpha-D-glucosamine 1-phosphate = D-glucosamine 6-phosphate. In terms of biological role, catalyzes the conversion of glucosamine-6-phosphate to glucosamine-1-phosphate. This is Phosphoglucosamine mutase from Granulibacter bethesdensis (strain ATCC BAA-1260 / CGDNIH1).